The chain runs to 424 residues: uncharacterized protein (424 aa).

11 helical membrane passes run 9–29 (ITWI…GILI), 41–61 (ASLF…GTLA), 86–106 (GAIL…IIAL), 119–139 (ADWQ…LLHM), 148–168 (ISTL…AVSL), 184–204 (WSAA…WEMI), 222–242 (LFLA…VTVG), 270–290 (VTVC…IAGF), 320–340 (VLTA…LFQI), 345–365 (LLKG…AAAL), and 377–397 (MALG…WALL).

This sequence belongs to the amino acid-polyamine-organocation (APC) superfamily.

The protein resides in the cell membrane. This is an uncharacterized protein from Bacillus subtilis (strain 168).